Here is a 278-residue protein sequence, read N- to C-terminus: DNA repair protein RecO (278 aa).

The segment covering 1-12 has biased composition (polar residues); it reads MGTNDALTSTED. Residues 1–42 are disordered; that stretch reads MGTNDALTSTEDAVTAGANDAPLPAPPEPPRKARRATSRTSD.

This sequence belongs to the RecO family.

Involved in DNA repair and RecF pathway recombination. This chain is DNA repair protein RecO, found in Burkholderia lata (strain ATCC 17760 / DSM 23089 / LMG 22485 / NCIMB 9086 / R18194 / 383).